The chain runs to 519 residues: uncharacterized protein (519 aa).

The next 14 membrane-spanning stretches (helical) occupy residues 37–57 (ISMS…AQLM), 82–102 (GQLS…ILIA), 114–134 (MFVL…FSYY), 146–166 (ALTG…LGRV), 175–195 (LIFA…SVFS), 209–229 (WTTA…IPHI), 240–260 (FDYL…FSWN), 269–289 (VPYV…FVLV), 309–329 (CVLI…YYLW), 337–357 (FATP…GCAA), 373–393 (IMVV…TAPI), 402–422 (FVSI…ATLM), 434–454 (IAAS…LGIA), and 475–495 (AWYM…LTVF).

The protein belongs to the major facilitator superfamily.

It localises to the endoplasmic reticulum. The protein localises to the membrane. This is an uncharacterized protein from Schizosaccharomyces pombe (strain 972 / ATCC 24843) (Fission yeast).